Reading from the N-terminus, the 527-residue chain is Peptide chain release factor 3 (527 aa).

The region spanning 10 to 278 (DKRRTFAIIS…AFIEYAPAPL (269 aa)) is the tr-type G domain. Residues 19–26 (SHPDAGKT), 87–91 (DTPGH), and 141–144 (NKLD) each bind GTP.

This sequence belongs to the TRAFAC class translation factor GTPase superfamily. Classic translation factor GTPase family. PrfC subfamily.

It is found in the cytoplasm. Functionally, increases the formation of ribosomal termination complexes and stimulates activities of RF-1 and RF-2. It binds guanine nucleotides and has strong preference for UGA stop codons. It may interact directly with the ribosome. The stimulation of RF-1 and RF-2 is significantly reduced by GTP and GDP, but not by GMP. This Pelobacter propionicus (strain DSM 2379 / NBRC 103807 / OttBd1) protein is Peptide chain release factor 3.